Here is a 229-residue protein sequence, read N- to C-terminus: Potassium/proton antiporter CemA (229 aa).

4 helical membrane passes run 7 to 27 (FIPF…YLSF), 106 to 126 (MILH…YSIL), 154 to 174 (ILLV…ELLI), and 189 to 209 (IISS…KYWI).

It belongs to the CemA family.

The protein localises to the plastid. It is found in the chloroplast inner membrane. The catalysed reaction is K(+)(in) + H(+)(out) = K(+)(out) + H(+)(in). Its function is as follows. Contributes to K(+)/H(+) antiport activity by supporting proton efflux to control proton extrusion and homeostasis in chloroplasts in a light-dependent manner to modulate photosynthesis. Prevents excessive induction of non-photochemical quenching (NPQ) under continuous-light conditions. Indirectly promotes efficient inorganic carbon uptake into chloroplasts. The protein is Potassium/proton antiporter CemA of Spinacia oleracea (Spinach).